We begin with the raw amino-acid sequence, 196 residues long: MLITLEGIDGSGKSTAHAALRERLTAEETTFTREPTDSWYGSAVERSIGDADADPLAELFLYTADHADHLSRVVRPALEAGEPVVSDRYSDSRYAYQGATLEGVIDEPMAYVKRVHEPFTRPPDATLYFDVPPTVGAERAGATNKFEAADYLESVRENYERLIEAEPERFHRIDATQSESAVVEAAVETVETLLSR.

Residue 7–14 (GIDGSGKS) participates in ATP binding.

Belongs to the thymidylate kinase family.

The enzyme catalyses dTMP + ATP = dTDP + ADP. This is Probable thymidylate kinase from Natronomonas pharaonis (strain ATCC 35678 / DSM 2160 / CIP 103997 / JCM 8858 / NBRC 14720 / NCIMB 2260 / Gabara) (Halobacterium pharaonis).